We begin with the raw amino-acid sequence, 527 residues long: Metal transporter Nramp6 (527 aa).

Transmembrane regions (helical) follow at residues 38–58, 71–91, 115–135, 143–163, 173–193, 221–241, 264–284, 321–341, 364–384, 385–405, 427–447, and 458–478; these read FFSY…PGNF, ELLW…SLAA, FMLW…EVIG, LFNI…LILL, LEFL…VELH, ISLL…ALVL, GLAL…SGAV, LFAI…TYAG, CLAI…GAGK, LIII…VPLL, TWII…SSFI, and VAIV…LAAI.

It belongs to the NRAMP (TC 2.A.55) family. Expressed in the vascular bundles of shoots, cotyledons, young leaves, sepals and petals, at the top of the flower stem and in the style. Expressed in the peduncle of developing siliques as well as in the septum and the funiculi.

The protein localises to the endomembrane system. Functionally, probable intracellular cadmium (Cd) transporter that participates in the distribution or availability of Cd within the cell. The sequence is that of Metal transporter Nramp6 (NRAMP6) from Arabidopsis thaliana (Mouse-ear cress).